Consider the following 201-residue polypeptide: NADH-quinone oxidoreductase subunit C (201 aa).

Belongs to the complex I 30 kDa subunit family. As to quaternary structure, NDH-1 is composed of 14 different subunits. Subunits NuoB, C, D, E, F, and G constitute the peripheral sector of the complex.

The protein localises to the cell inner membrane. The enzyme catalyses a quinone + NADH + 5 H(+)(in) = a quinol + NAD(+) + 4 H(+)(out). In terms of biological role, NDH-1 shuttles electrons from NADH, via FMN and iron-sulfur (Fe-S) centers, to quinones in the respiratory chain. The immediate electron acceptor for the enzyme in this species is believed to be ubiquinone. Couples the redox reaction to proton translocation (for every two electrons transferred, four hydrogen ions are translocated across the cytoplasmic membrane), and thus conserves the redox energy in a proton gradient. The chain is NADH-quinone oxidoreductase subunit C from Aromatoleum aromaticum (strain DSM 19018 / LMG 30748 / EbN1) (Azoarcus sp. (strain EbN1)).